A 431-amino-acid polypeptide reads, in one-letter code: Adenylosuccinate synthetase (431 aa).

GTP-binding positions include glycine 12–lysine 18 and glycine 40–threonine 42. The Proton acceptor role is filled by aspartate 13. Mg(2+) is bound by residues aspartate 13 and glycine 40. IMP contacts are provided by residues aspartate 13–lysine 16, asparagine 38–histidine 41, threonine 128, arginine 142, glutamine 223, threonine 238, and arginine 301. Histidine 41 serves as the catalytic Proton donor. Residue threonine 297–arginine 303 coordinates substrate. Residues arginine 303, serine 329–aspartate 331, and serine 411–glycine 413 contribute to the GTP site.

Belongs to the adenylosuccinate synthetase family. In terms of assembly, homodimer. Requires Mg(2+) as cofactor.

It is found in the cytoplasm. It catalyses the reaction IMP + L-aspartate + GTP = N(6)-(1,2-dicarboxyethyl)-AMP + GDP + phosphate + 2 H(+). It functions in the pathway purine metabolism; AMP biosynthesis via de novo pathway; AMP from IMP: step 1/2. Plays an important role in the de novo pathway of purine nucleotide biosynthesis. Catalyzes the first committed step in the biosynthesis of AMP from IMP. This is Adenylosuccinate synthetase from Lacticaseibacillus casei (strain BL23) (Lactobacillus casei).